Consider the following 77-residue polypeptide: U10-lycotoxin-Ls1a (77 aa).

A signal peptide spans 1–20 (MKLIIFTGLVLFAIVSLIEA). The propeptide occupies 21–26 (EEESGR).

Belongs to the neurotoxin 19 (CSTX) family. 09 (U10-Lctx) subfamily. Post-translationally, contains 4 disulfide bonds. Expressed by the venom gland.

It localises to the secreted. This Lycosa singoriensis (Wolf spider) protein is U10-lycotoxin-Ls1a.